The primary structure comprises 162 residues: NADH-quinone oxidoreductase subunit I (162 aa).

2 4Fe-4S ferredoxin-type domains span residues 52-82 and 93-122; these read LRRYPNGEERCIACKLCEAVCPAQAITIEAG and VRYDIDMVKCIYCGLCQEACPVDAIVEGPN. Cys62, Cys65, Cys68, Cys72, Cys102, Cys105, Cys108, and Cys112 together coordinate [4Fe-4S] cluster.

It belongs to the complex I 23 kDa subunit family. In terms of assembly, NDH-1 is composed of 14 different subunits. Subunits NuoA, H, J, K, L, M, N constitute the membrane sector of the complex. Requires [4Fe-4S] cluster as cofactor.

The protein resides in the cell inner membrane. The catalysed reaction is a quinone + NADH + 5 H(+)(in) = a quinol + NAD(+) + 4 H(+)(out). NDH-1 shuttles electrons from NADH, via FMN and iron-sulfur (Fe-S) centers, to quinones in the respiratory chain. The immediate electron acceptor for the enzyme in this species is believed to be ubiquinone. Couples the redox reaction to proton translocation (for every two electrons transferred, four hydrogen ions are translocated across the cytoplasmic membrane), and thus conserves the redox energy in a proton gradient. This is NADH-quinone oxidoreductase subunit I from Bradyrhizobium sp. (strain ORS 278).